A 105-amino-acid polypeptide reads, in one-letter code: Insulin (105 aa).

The signal sequence occupies residues 1–24 (MALWTRLRPLLALLALWPPPPARA). 3 cysteine pairs are disulfide-bonded: Cys-31-Cys-91, Cys-43-Cys-104, and Cys-90-Cys-95. The propeptide at 57 to 82 (EVEGPQVGALELAGGPGAGGLEGPPQ) is c peptide.

Belongs to the insulin family. Heterodimer of a B chain and an A chain linked by two disulfide bonds.

Its subcellular location is the secreted. Its function is as follows. Insulin decreases blood glucose concentration. It increases cell permeability to monosaccharides, amino acids and fatty acids. It accelerates glycolysis, the pentose phosphate cycle, and glycogen synthesis in liver. This is Insulin (INS) from Bos taurus (Bovine).